A 428-amino-acid polypeptide reads, in one-letter code: UPF0229 protein YeaH (428 aa).

Over residues 78 to 90 (GNDHFIQNDRIER) the composition is skewed to basic and acidic residues. A disordered region spans residues 78-111 (GNDHFIQNDRIERPQGGGGGGSGSGQGQASQDGE). Gly residues predominate over residues 92 to 103 (QGGGGGGSGSGQ).

It belongs to the UPF0229 family.

This is UPF0229 protein YeaH from Salmonella choleraesuis (strain SC-B67).